Here is a 338-residue protein sequence, read N- to C-terminus: dTDP-glucose 4,6-dehydratase (338 aa).

NAD(+) contacts are provided by residues 12-13 (FI), 33-36 (DKLT), 59-60 (DI), 81-85 (LAAES), and threonine 100. Serine 85 contributes to the substrate binding site. Threonine 134 serves as a coordination point for substrate. Aspartate 135 acts as the Proton donor in catalysis. Active-site proton acceptor residues include glutamate 136 and tyrosine 160. 160 to 164 (YSASK) contacts NAD(+). Asparagine 189 is a binding site for substrate. Asparagine 190 contacts NAD(+). Substrate is bound by residues 199 to 200 (KL), 215 to 217 (PIY), arginine 224, asparagine 259, and 293 to 297 (DRPGH).

Belongs to the NAD(P)-dependent epimerase/dehydratase family. dTDP-glucose dehydratase subfamily. Homodimer. It depends on NAD(+) as a cofactor.

The enzyme catalyses dTDP-alpha-D-glucose = dTDP-4-dehydro-6-deoxy-alpha-D-glucose + H2O. It participates in carbohydrate biosynthesis; dTDP-L-rhamnose biosynthesis. It functions in the pathway bacterial outer membrane biogenesis; LPS O-antigen biosynthesis. Catalyzes the dehydration of dTDP-D-glucose to form dTDP-6-deoxy-D-xylo-4-hexulose via a three-step process involving oxidation, dehydration and reduction. The chain is dTDP-glucose 4,6-dehydratase (rffG) from Haemophilus influenzae (strain ATCC 51907 / DSM 11121 / KW20 / Rd).